Consider the following 116-residue polypeptide: Large ribosomal subunit protein uL18 (116 aa).

The protein belongs to the universal ribosomal protein uL18 family. Part of the 50S ribosomal subunit; part of the 5S rRNA/L5/L18/L25 subcomplex. Contacts the 5S and 23S rRNAs.

Its function is as follows. This is one of the proteins that bind and probably mediate the attachment of the 5S RNA into the large ribosomal subunit, where it forms part of the central protuberance. This is Large ribosomal subunit protein uL18 from Psychrobacter arcticus (strain DSM 17307 / VKM B-2377 / 273-4).